The primary structure comprises 273 residues: Tryptase (273 aa).

The N-terminal stretch at 1–18 (MLKLLLLTLPLLSSLVHA) is a signal peptide. Residues 19-28 (APGPAMTREG) constitute a propeptide, activation peptide. The Peptidase S1 domain occupies 29 to 270 (IVGGQEAHGN…YLDWIHHYVP (242 aa)). N-linked (GlcNAc...) asparagine glycosylation occurs at asparagine 49. Cysteines 57 and 73 form a disulfide. Residues histidine 72 and aspartate 119 each act as charge relay system in the active site. N-linked (GlcNAc...) asparagine glycosylation is present at asparagine 130. 3 cysteine pairs are disulfide-bonded: cysteine 153–cysteine 228, cysteine 186–cysteine 209, and cysteine 218–cysteine 246. Residue serine 222 is the Charge relay system of the active site.

It belongs to the peptidase S1 family. Tryptase subfamily.

It catalyses the reaction Preferential cleavage: Arg-|-Xaa, Lys-|-Xaa, but with more restricted specificity than trypsin.. Its function is as follows. Tryptase is the major neutral protease present in mast cells and is secreted upon the coupled activation-degranulation response of this cell type. May play a role in innate immunity. The protein is Tryptase (Tpsab1) of Mus musculus (Mouse).